The following is a 340-amino-acid chain: Phosphoribosylformylglycinamidine cyclo-ligase (340 aa).

It belongs to the AIR synthase family.

Its subcellular location is the cytoplasm. It carries out the reaction 2-formamido-N(1)-(5-O-phospho-beta-D-ribosyl)acetamidine + ATP = 5-amino-1-(5-phospho-beta-D-ribosyl)imidazole + ADP + phosphate + H(+). It participates in purine metabolism; IMP biosynthesis via de novo pathway; 5-amino-1-(5-phospho-D-ribosyl)imidazole from N(2)-formyl-N(1)-(5-phospho-D-ribosyl)glycinamide: step 2/2. The chain is Phosphoribosylformylglycinamidine cyclo-ligase from Streptococcus agalactiae serotype V (strain ATCC BAA-611 / 2603 V/R).